Consider the following 189-residue polypeptide: dCTP deaminase (189 aa).

DCTP contacts are provided by residues 112-117 (KSTYAR), 136-138 (TLE), Q157, Y171, and Q181. The active-site Proton donor/acceptor is E138.

The protein belongs to the dCTP deaminase family. As to quaternary structure, homotrimer.

The enzyme catalyses dCTP + H2O + H(+) = dUTP + NH4(+). It participates in pyrimidine metabolism; dUMP biosynthesis; dUMP from dCTP (dUTP route): step 1/2. Its function is as follows. Catalyzes the deamination of dCTP to dUTP. The protein is dCTP deaminase of Burkholderia orbicola (strain MC0-3).